The following is a 484-amino-acid chain: FAD-dependent monooxygenase aurC (484 aa).

Positions 1–21 are cleaved as a signal peptide; it reads MGAYSFRVIIVGGSITGMTLA. Residues glutamate 35, glycine 49, and arginine 108 each coordinate FAD. Residue tyrosine 216 is part of the active site. FAD-binding residues include aspartate 308 and glycine 321. The helical transmembrane segment at 451 to 471 threads the bilayer; sequence FAVASLIVLIVVLARALDSPA.

Belongs to the paxM FAD-dependent monooxygenase family. It depends on FAD as a cofactor.

It localises to the membrane. It functions in the pathway polyketide biosynthesis. In terms of biological role, FAD-dependent monooxygenase; part of the gene cluster that mediates the biosynthesis of aurovertins, fungal polyketides that exhibit potent inhibition of adenosine triphosphate synthase. Tha biosynthesis starts with the HR-PKS aurA that selects propionate as the starter unit; synthesizes a hexa-ene chain through the repeated functions of the KR and DH domains in the first six iterations; selectively introduces three alpha-methyl substitutions at C4, C6, and C16 using the S-adensylmethionine-dependent cMET; and shuts off KR and DH in the last three iterations to afford a 1,3,5-triketo portion that can undergo intramolecular cyclization to yield the alpha-pyrone intermediate. AurE may act as a cyclase and enhances the rate of pyrone formation and product release of aurA. The methyltransferase aurB then methylates the C17 hydroxyl group. C17 methylation is required to initiate epoxidation by the downstream monooxygenase aurC. The monooxygenase aurC and the epoxide hydrolase aurD can iteratively transform the terminal triene portion of the methylated precursor into the dioxabicyclo[3.2.1]octane scaffold of aurovertin E. Epoxidation modifications of the precursor occur in two separate steps; bis-epoxidation of the two terminal olefins takes place first, followed by another epoxidation that occurs at C7-C8 after tetrahydrofuran formation. The O-acyltransferase aurG converts aurovertin E to aurovertin A. This chain is FAD-dependent monooxygenase aurC, found in Calcarisporium arbuscula (Dendryphion arbuscula).